The chain runs to 359 residues: Pyruvate dehydrogenase E1 component subunit beta, mitochondrial (359 aa).

The N-terminal 30 residues, 1 to 30 (MAAVAGLVRGPLRQASGLLKRRFHRSAPAA), are a transit peptide targeting the mitochondrion. Phosphotyrosine is present on Tyr-67. Position 89 (Glu-89) interacts with thiamine diphosphate. Positions 142, 190, 191, 193, and 195 each coordinate K(+). Lys-354 carries the post-translational modification N6-acetyllysine.

In terms of assembly, heterotetramer of two PDHA1 and two PDHB subunits. The heterotetramer interacts with DLAT, and is part of the multimeric pyruvate dehydrogenase complex that contains multiple copies of pyruvate dehydrogenase (E1), dihydrolipoamide acetyltransferase (DLAT, E2) and lipoamide dehydrogenase (DLD, E3). These subunits are bound to an inner core composed of about 48 DLAT and 12 PDHX molecules. Interacts with DLAT. It depends on thiamine diphosphate as a cofactor.

The protein localises to the mitochondrion matrix. The enzyme catalyses N(6)-[(R)-lipoyl]-L-lysyl-[protein] + pyruvate + H(+) = N(6)-[(R)-S(8)-acetyldihydrolipoyl]-L-lysyl-[protein] + CO2. The pyruvate dehydrogenase complex catalyzes the overall conversion of pyruvate to acetyl-CoA and CO(2), and thereby links the glycolytic pathway to the tricarboxylic cycle. This Rattus norvegicus (Rat) protein is Pyruvate dehydrogenase E1 component subunit beta, mitochondrial (Pdhb).